Consider the following 424-residue polypeptide: 3-phosphoshikimate 1-carboxyvinyltransferase (424 aa).

3-phosphoshikimate-binding residues include Lys-21, Ser-22, and Arg-26. Phosphoenolpyruvate is bound at residue Lys-21. Phosphoenolpyruvate contacts are provided by Gly-92 and Arg-120. 3-phosphoshikimate-binding residues include Ser-163, Ser-164, Gln-165, Ser-191, Asp-306, and Lys-333. Position 165 (Gln-165) interacts with phosphoenolpyruvate. The active-site Proton acceptor is Asp-306. The phosphoenolpyruvate site is built by Arg-337, Arg-379, and Lys-405.

Belongs to the EPSP synthase family. Monomer.

It is found in the cytoplasm. The catalysed reaction is 3-phosphoshikimate + phosphoenolpyruvate = 5-O-(1-carboxyvinyl)-3-phosphoshikimate + phosphate. It functions in the pathway metabolic intermediate biosynthesis; chorismate biosynthesis; chorismate from D-erythrose 4-phosphate and phosphoenolpyruvate: step 6/7. Its function is as follows. Catalyzes the transfer of the enolpyruvyl moiety of phosphoenolpyruvate (PEP) to the 5-hydroxyl of shikimate-3-phosphate (S3P) to produce enolpyruvyl shikimate-3-phosphate and inorganic phosphate. This is 3-phosphoshikimate 1-carboxyvinyltransferase from Clostridium perfringens (strain 13 / Type A).